Reading from the N-terminus, the 431-residue chain is D-tagatose-1,6-bisphosphate aldolase subunit KbaZ (431 aa).

Belongs to the GatZ/KbaZ family. KbaZ subfamily. As to quaternary structure, forms a complex with KbaY.

It functions in the pathway carbohydrate metabolism; D-tagatose 6-phosphate degradation; D-glyceraldehyde 3-phosphate and glycerone phosphate from D-tagatose 6-phosphate: step 2/2. Component of the tagatose-1,6-bisphosphate aldolase KbaYZ that is required for full activity and stability of the Y subunit. Could have a chaperone-like function for the proper and stable folding of KbaY. When expressed alone, KbaZ does not show any aldolase activity. The chain is D-tagatose-1,6-bisphosphate aldolase subunit KbaZ from Citrobacter koseri (strain ATCC BAA-895 / CDC 4225-83 / SGSC4696).